The primary structure comprises 81 residues: Styelin-E (81 aa).

Positions 1–22 (MQMKATILIVLVALFMIQQSEA) are cleaved as a signal peptide. A 6'-bromotryptophan modification is found at Trp-24. At Arg-26 the chain carries 3,4-dihydroxyarginine. Lys-27, Lys-30, and Lys-34 each carry 4,5-dihydroxylysine. 3',4'-dihydroxyphenylalanine is present on residues Tyr-36 and Tyr-37. Lys-38 carries the post-translational modification 4,5-dihydroxylysine. 5-hydroxylysine is present on Lys-40. A 3',4'-dihydroxyphenylalanine mark is found at Tyr-41 and Tyr-42. Lys-44 is subject to 5-hydroxylysine. At Leu-54 the chain carries Leucine amide. Positions 56-81 (DMTDEEFQDFMKEVEQAREEELQSRQ) are cleaved as a propeptide — removed in mature form.

Contains L-DOPA (3',4'-dihydroxyphenylalanine). Hemocytes and pharyngeal tissues.

The protein resides in the secreted. In terms of biological role, bactericidal against several Gram-positive and Gram-negative bacteria. This chain is Styelin-E, found in Styela clava (Sea squirt).